Here is a 360-residue protein sequence, read N- to C-terminus: Phospho-N-acetylmuramoyl-pentapeptide-transferase (360 aa).

Residues 1 to 25 are Periplasmic-facing; it reads MLVWLAEHLVKYYSGFNVFSYLTFR. The chain crosses the membrane as a helical span at residues 26–46; it reads AIVSLLTALFISLWMGPRMIA. The Cytoplasmic portion of the chain corresponds to 47–71; the sequence is RLQKLSFGQVVRNDGPESHFSKRGT. A helical transmembrane segment spans residues 72–92; sequence PTMGGIMILTAIVISVLLWAY. Proline 93 is a topological domain (periplasmic). A helical membrane pass occupies residues 94–114; the sequence is SNPYVWCVLVVLIGYGIIGFV. Residues 115-131 are Cytoplasmic-facing; the sequence is DDYHKVVRKDTKGLIAR. Residues 132-152 traverse the membrane as a helical segment; that stretch reads WKYFWMSVIALGVAFALYLVG. Residues 153-167 lie on the Periplasmic side of the membrane; that stretch reads KDTPATQLVVPFFKD. A helical transmembrane segment spans residues 168–188; that stretch reads VMPQLGLFYILLSYFVIVGTG. The Cytoplasmic segment spans residues 189–198; sequence NAVNLTDGLD. The chain crosses the membrane as a helical span at residues 199-219; the sequence is GLAIMPTVFVAAGFALVAWAT. At 220–235 the chain is on the periplasmic side; it reads GNMNFANYLHIPYLRY. A helical membrane pass occupies residues 236–256; sequence AGELVIVCTAIVGAGLGFLWF. Over 257–262 the chain is Cytoplasmic; sequence NTYPAQ. The chain crosses the membrane as a helical span at residues 263–283; that stretch reads VFMGDVGSLALGGALGIIAVL. The Periplasmic segment spans residues 284–287; that stretch reads LRQE. The helical transmembrane segment at 288-308 threads the bilayer; that stretch reads FLLVIMGGVFVVETLSVILQV. Topologically, residues 309–337 are cytoplasmic; that stretch reads GSFKLRGQRIFRMAPIHHHYELKGWPEPR. A helical transmembrane segment spans residues 338–358; the sequence is VIVRFWIISLMLVLIGLATLK. Residues 359–360 are Periplasmic-facing; sequence VR.

The protein belongs to the glycosyltransferase 4 family. MraY subfamily. Mg(2+) is required as a cofactor.

It is found in the cell inner membrane. The enzyme catalyses UDP-N-acetyl-alpha-D-muramoyl-L-alanyl-gamma-D-glutamyl-meso-2,6-diaminopimeloyl-D-alanyl-D-alanine + di-trans,octa-cis-undecaprenyl phosphate = di-trans,octa-cis-undecaprenyl diphospho-N-acetyl-alpha-D-muramoyl-L-alanyl-D-glutamyl-meso-2,6-diaminopimeloyl-D-alanyl-D-alanine + UMP. It functions in the pathway cell wall biogenesis; peptidoglycan biosynthesis. Catalyzes the initial step of the lipid cycle reactions in the biosynthesis of the cell wall peptidoglycan: transfers peptidoglycan precursor phospho-MurNAc-pentapeptide from UDP-MurNAc-pentapeptide onto the lipid carrier undecaprenyl phosphate, yielding undecaprenyl-pyrophosphoryl-MurNAc-pentapeptide, known as lipid I. This chain is Phospho-N-acetylmuramoyl-pentapeptide-transferase, found in Salmonella paratyphi A (strain ATCC 9150 / SARB42).